We begin with the raw amino-acid sequence, 77 residues long: U8-lycotoxin-Ls1m (77 aa).

The N-terminal stretch at 1–20 (MKLIIFTGLVLFSIVSLIEA) is a signal peptide. Positions 21 to 26 (QAENEK) are excised as a propeptide.

It belongs to the neurotoxin 19 (CSTX) family. 08 (U8-Lctx) subfamily. Contains 4 disulfide bonds. Expressed by the venom gland.

It is found in the secreted. This chain is U8-lycotoxin-Ls1m, found in Lycosa singoriensis (Wolf spider).